Reading from the N-terminus, the 246-residue chain is uncharacterized protein (246 aa).

6 helical membrane-spanning segments follow: residues 7–27 (KVTLVSLILMAVFQFFMALII), 50–70 (LNILLQALTIVIAATIVSMEF), 99–119 (VSFYLYLAYYILALLFGLLFF), 135–155 (LALIGSNWLEAVMMGLFGLLC), 163–183 (AVAVVVSFVVLYGASTLVQLM), and 219–239 (FSIGILIIHAIFFIVVGWWCF).

The protein localises to the cell membrane. This is an uncharacterized protein from Bacillus subtilis (strain 168).